The primary structure comprises 210 residues: 3-hexulose-6-phosphate synthase (210 aa).

This sequence belongs to the HPS/KGPDC family. HPS subfamily.

It carries out the reaction D-ribulose 5-phosphate + formaldehyde = D-arabino-hex-3-ulose 6-phosphate. The protein operates within one-carbon metabolism; formaldehyde assimilation via RuMP pathway; D-fructose 6-phosphate from D-ribulose 5-phosphate and formaldehyde: step 1/2. In terms of biological role, catalyzes the condensation of ribulose 5-phosphate with formaldehyde to form 3-hexulose 6-phosphate. Together with HxlB, may act as a formaldehyde detoxification system. In Bacillus subtilis (strain 168), this protein is 3-hexulose-6-phosphate synthase (hxlA).